The following is a 361-amino-acid chain: MKPSIHSLVHQTMQEWVLEQGEKKFRADQIWEWLYRKRVQSFEEMTNLSKDLIAKLNDQFVVNPLKQRIVQESADGTVKYLFELPDGMLIETVLMRQHYGLSVCVTTQVGCNIGCTFCASGLIKKQRDLNNGEIVAQIMLVQKYFDERGQDERISHIVVMGIGEPFDNYNNVLNFFRTINDDKGMAIGARHITVSTSGLAHKIRDFADEGVQVNLAVSLHAPNNELRSSIMKINRAFPIEKLFAAIEYYIETTNRRVTFEYIMLNEVNDGVEQALELTELLKNIKKLSYVNLIPYNPVSEHDQYSRSPKECVLAFYDTLKKKGVNCVVRQEHGTDIDAACGQLRSNTMKRDRQKAVAAVNP.

Catalysis depends on E91, which acts as the Proton acceptor. The Radical SAM core domain occupies 97–329 (QHYGLSVCVT…KKKGVNCVVR (233 aa)). An intrachain disulfide couples C104 to C340. [4Fe-4S] cluster is bound by residues C111, C115, and C118. S-adenosyl-L-methionine contacts are provided by residues 163–164 (GE), S195, 218–220 (SLH), and N296. Catalysis depends on C340, which acts as the S-methylcysteine intermediate.

The protein belongs to the radical SAM superfamily. RlmN family. The cofactor is [4Fe-4S] cluster.

Its subcellular location is the cytoplasm. It catalyses the reaction adenosine(2503) in 23S rRNA + 2 reduced [2Fe-2S]-[ferredoxin] + 2 S-adenosyl-L-methionine = 2-methyladenosine(2503) in 23S rRNA + 5'-deoxyadenosine + L-methionine + 2 oxidized [2Fe-2S]-[ferredoxin] + S-adenosyl-L-homocysteine. The enzyme catalyses adenosine(37) in tRNA + 2 reduced [2Fe-2S]-[ferredoxin] + 2 S-adenosyl-L-methionine = 2-methyladenosine(37) in tRNA + 5'-deoxyadenosine + L-methionine + 2 oxidized [2Fe-2S]-[ferredoxin] + S-adenosyl-L-homocysteine. Functionally, specifically methylates position 2 of adenine 2503 in 23S rRNA and position 2 of adenine 37 in tRNAs. The sequence is that of Probable dual-specificity RNA methyltransferase RlmN from Streptococcus pneumoniae serotype 4 (strain ATCC BAA-334 / TIGR4).